The chain runs to 449 residues: Myb family transcription factor PHL6 (449 aa).

Positions 49-72 are disordered; the sequence is PFIRSQSPDSPGQLWPKNSSQSTF. In terms of domain architecture, HTH myb-type spans 238 to 298; sequence ANQKSRMRWT…HLQKYRLAKY (61 aa). Positions 269–294 form a DNA-binding region, H-T-H motif; the sequence is PKAVKKLMNVEGLTIYHVKSHLQKYR. A disordered region spans residues 301 to 327; the sequence is EKKEEKRTDNSEEKKLALSKSEADEKK. The coiled coil stretch occupies residues 334-354; sequence TEALRMQMEVQKQLHEQLEVQ. The short motif at 347 to 352 is the LHEQLE element; it reads LHEQLE. The tract at residues 376-449 is disordered; that stretch reads RKTGRWISSS…NIAESEDPKR (74 aa). Over residues 381–410 the composition is skewed to polar residues; sequence WISSSSQTVLSPSDDSIPDSQNMSKTKASS.

This sequence belongs to the MYB-CC family.

The protein localises to the nucleus. The sequence is that of Myb family transcription factor PHL6 from Arabidopsis thaliana (Mouse-ear cress).